We begin with the raw amino-acid sequence, 490 residues long: Cytochrome P450 2C29 (490 aa).

An N-terminal signal peptide occupies residues 1-25 (MDLVVFLALTLSCLILLSLWRQSSG). An N6-acetyllysine mark is found at Lys-249, Lys-252, and Lys-375. Position 435 (Cys-435) interacts with heme.

The protein belongs to the cytochrome P450 family. Heme is required as a cofactor. In terms of tissue distribution, expressed in liver as well as in extrahepatic tissues including brain, kidney, lung, heart, and intestine.

The protein resides in the endoplasmic reticulum membrane. It localises to the microsome membrane. The enzyme catalyses an organic molecule + reduced [NADPH--hemoprotein reductase] + O2 = an alcohol + oxidized [NADPH--hemoprotein reductase] + H2O + H(+). The catalysed reaction is (5Z,8Z,11Z,14Z)-eicosatetraenoate + reduced [NADPH--hemoprotein reductase] + O2 = 14,15-epoxy-(5Z,8Z,11Z)-eicosatrienoate + oxidized [NADPH--hemoprotein reductase] + H2O + H(+). It functions in the pathway lipid metabolism; arachidonate metabolism. Its function is as follows. A cytochrome P450 monooxygenase that selectively catalyzes the epoxidation of 14,15 double bond of (5Z,8Z,11Z,14Z)-eicosatetraenoic acid (arachidonate) forming 14,15-epoxyeicosatrienoic acid (14,15-EET) regioisomer. Mechanistically, uses molecular oxygen inserting one oxygen atom into a substrate, and reducing the second into a water molecule, with two electrons provided by NADPH via cytochrome P450 reductase (CPR; NADPH--hemoprotein reductase). The sequence is that of Cytochrome P450 2C29 from Mus musculus (Mouse).